The primary structure comprises 620 residues: 1-deoxy-D-xylulose-5-phosphate synthase (620 aa).

Residues His80 and 121-123 (GHS) contribute to the thiamine diphosphate site. Asp152 is a binding site for Mg(2+). Residues 153-154 (GA), Asn181, Tyr288, and Glu370 contribute to the thiamine diphosphate site. Asn181 is a Mg(2+) binding site.

The protein belongs to the transketolase family. DXPS subfamily. As to quaternary structure, homodimer. The cofactor is Mg(2+). Thiamine diphosphate is required as a cofactor.

It carries out the reaction D-glyceraldehyde 3-phosphate + pyruvate + H(+) = 1-deoxy-D-xylulose 5-phosphate + CO2. The protein operates within metabolic intermediate biosynthesis; 1-deoxy-D-xylulose 5-phosphate biosynthesis; 1-deoxy-D-xylulose 5-phosphate from D-glyceraldehyde 3-phosphate and pyruvate: step 1/1. Its function is as follows. Catalyzes the acyloin condensation reaction between C atoms 2 and 3 of pyruvate and glyceraldehyde 3-phosphate to yield 1-deoxy-D-xylulose-5-phosphate (DXP). The protein is 1-deoxy-D-xylulose-5-phosphate synthase of Escherichia coli O139:H28 (strain E24377A / ETEC).